The sequence spans 351 residues: Ribosomal RNA large subunit methyltransferase N (351 aa).

Catalysis depends on Glu92, which acts as the Proton acceptor. One can recognise a Radical SAM core domain in the interval 105–337 (GHPRSTICVS…CTVRVEKGTE (233 aa)). The cysteines at positions 112 and 342 are disulfide-linked. The [4Fe-4S] cluster site is built by Cys119, Cys123, and Cys126. S-adenosyl-L-methionine is bound by residues 169 to 170 (GE), Ser201, 224 to 226 (SLH), and Asn300. Residue Cys342 is the S-methylcysteine intermediate of the active site.

This sequence belongs to the radical SAM superfamily. RlmN family. It depends on [4Fe-4S] cluster as a cofactor.

The protein resides in the cytoplasm. It carries out the reaction adenosine(2503) in 23S rRNA + 2 reduced [2Fe-2S]-[ferredoxin] + 2 S-adenosyl-L-methionine = 2-methyladenosine(2503) in 23S rRNA + 5'-deoxyadenosine + L-methionine + 2 oxidized [2Fe-2S]-[ferredoxin] + S-adenosyl-L-homocysteine. Its function is as follows. Specifically methylates position 2 of adenine 2503 in 23S rRNA. The chain is Ribosomal RNA large subunit methyltransferase N from Nitrosopumilus maritimus (strain SCM1).